A 519-amino-acid polypeptide reads, in one-letter code: Berghepain-1 (519 aa).

Topologically, residues 1–32 (MINDIRRINITTSSIESLNENSKYLKRNHKRT) are cytoplasmic. Residues 33 to 53 (IKICAYAITTFALFFIVVVYF) form a helical; Signal-anchor for type II membrane protein membrane-spanning segment. Topologically, residues 54-519 (KNQTNVNDAN…IGIDVFFPIL (466 aa)) are lumenal. 2 N-linked (GlcNAc...) asparagine glycosylation sites follow: Asn55 and Asn143. Cystine bridges form between Cys298–Cys340, Cys333–Cys373, Cys358–Cys378, and Cys427–Cys508. Residue Cys301 is part of the active site. Asn432 carries N-linked (GlcNAc...) asparagine glycosylation. Catalysis depends on residues His433 and Asn483.

It belongs to the peptidase C1 family.

The protein resides in the membrane. Cysteine protease. Required for host hepatocyte-derived merozoite infectivity and to a lesser extent for host erythrocyte-derived merozoite infectivity. The sequence is that of Berghepain-1 from Plasmodium berghei (strain Anka).